The sequence spans 1184 residues: Non-receptor tyrosine-protein kinase TYK2 (1184 aa).

The region spanning 33–430 is the FERM domain; it reads LMVLLHWPGP…GYFRLTADSS (398 aa). Residues 294-368 form a disordered region; sequence CYIQNSGQTA…KAGEHLTESP (75 aa). Tyr295 carries the post-translational modification Phosphotyrosine. The SH2; atypical domain occupies 449-529; the sequence is GIHGPLMDPF…GRSFASLGDL (81 aa). Ser525 is subject to Phosphoserine. The region spanning 589-866 is the Protein kinase 1 domain; that stretch reads ITQLSHLGQG…RTILRDLTRL (278 aa). Tyr604 bears the Phosphotyrosine mark. Position 881 is a phosphoserine (Ser881). In terms of domain architecture, Protein kinase 2 spans 894-1166; it reads LKKIRDLGEG…PTFQNLVPIL (273 aa). Residues 900-908 and Lys927 contribute to the ATP site; that span reads LGEGHFGKV. The Proton acceptor role is filled by Asp1020. Tyr1051 carries the post-translational modification Phosphotyrosine; by autocatalysis. The residue at position 1052 (Tyr1052) is a Phosphotyrosine.

This sequence belongs to the protein kinase superfamily. Tyr protein kinase family. JAK subfamily. As to quaternary structure, interacts (via FERM domain) with JAKMIP1. Interacts with PIK3R1; this interaction is important for cell migration. Interacts with MPL/TPOR. Post-translationally, phosphorylation by JAK1 at Tyr-1051 and Tyr-1052 induces kinase activation.

The catalysed reaction is L-tyrosyl-[protein] + ATP = O-phospho-L-tyrosyl-[protein] + ADP + H(+). The protein kinase 1 domain (also termed pseudokinase domain) mediates autoinhibition of the TYK2 kinase domain. Tyrosine kinase of the non-receptor type involved in numerous cytokines and interferons signaling, which regulates cell growth, development, cell migration, innate and adaptive immunity. Plays both structural and catalytic roles in numerous interleukins and interferons (IFN-alpha/beta) signaling. Associates with heterodimeric cytokine receptor complexes and activates STAT family members including STAT1, STAT3, STAT4 or STAT6. The heterodimeric cytokine receptor complexes are composed of (1) a TYK2-associated receptor chain (IFNAR1, IL12RB1, IL10RB or IL13RA1), and (2) a second receptor chain associated either with JAK1 or JAK2. In response to cytokine-binding to receptors, phosphorylates and activates receptors (IFNAR1, IL12RB1, IL10RB or IL13RA1), creating docking sites for STAT members. In turn, recruited STATs are phosphorylated by TYK2 (or JAK1/JAK2 on the second receptor chain), form homo- and heterodimers, translocate to the nucleus, and regulate cytokine/growth factor responsive genes. Negatively regulates STAT3 activity by promototing phosphorylation at a specific tyrosine that differs from the site used for signaling. The protein is Non-receptor tyrosine-protein kinase TYK2 of Mus musculus (Mouse).